The chain runs to 344 residues: MIDRYSLLRPWLFCLDPEQAHNLTLKNLDRAQRFGLLQRLVSKPIADPQNLCGIEFPNPVGLAAGLDKDGKHIDSLAALGFGFLEIGTVTPRPQAGNPKPRMFRLPQAEAIINRMGFNNDGVEACVSRVRQSIFWQRGGVLGLNIGKNAITPIEDAASDYIAAMEAVYEIATYITVNISSPNTQNLRALQGEDMLRSLLRSLDDARKRLSDRYGVRKPLFLKIAPDLDQNDIHLIADLLMEFNIDAVIATNTTISREAVTGMQYGEETGGLSGAPVRIASNIVIRALKARLGVQLPIIGVGGILSGADAREKIMAGASLVQLYSGLIYKGPDLVSECAKALRQS.

Residues 64–68 (AGLDK) and threonine 88 each bind FMN. Lysine 68 is a binding site for substrate. Residue 113–117 (NRMGF) coordinates substrate. Residues asparagine 144 and asparagine 177 each contribute to the FMN site. Asparagine 177 provides a ligand contact to substrate. Serine 180 acts as the Nucleophile in catalysis. Asparagine 182 contacts substrate. FMN-binding residues include lysine 222 and threonine 250. 251-252 (NT) provides a ligand contact to substrate. Residues glycine 273, glycine 302, and 323-324 (YS) each bind FMN.

Belongs to the dihydroorotate dehydrogenase family. Type 2 subfamily. As to quaternary structure, monomer. FMN is required as a cofactor.

It is found in the cell membrane. The catalysed reaction is (S)-dihydroorotate + a quinone = orotate + a quinol. It functions in the pathway pyrimidine metabolism; UMP biosynthesis via de novo pathway; orotate from (S)-dihydroorotate (quinone route): step 1/1. Functionally, catalyzes the conversion of dihydroorotate to orotate with quinone as electron acceptor. The chain is Dihydroorotate dehydrogenase (quinone) from Polynucleobacter asymbioticus (strain DSM 18221 / CIP 109841 / QLW-P1DMWA-1) (Polynucleobacter necessarius subsp. asymbioticus).